A 437-amino-acid polypeptide reads, in one-letter code: GTPase Obg (437 aa).

In terms of domain architecture, Obg spans 2 to 160 (SMFLDTAKIS…RELQLELKIL (159 aa)). The region spanning 161–338 (ADVGLVGFPS…LMDATAELLA (178 aa)) is the OBG-type G domain. GTP is bound by residues 167-174 (GFPSVGKS), 192-196 (FTTIV), 214-217 (DLPG), 284-287 (NKMD), and 319-321 (SSL). Mg(2+) is bound by residues Ser-174 and Thr-194. One can recognise an OCT domain in the interval 359-437 (GFNEDERPFE…IGNFEFEFVD (79 aa)).

Belongs to the TRAFAC class OBG-HflX-like GTPase superfamily. OBG GTPase family. In terms of assembly, monomer. It depends on Mg(2+) as a cofactor.

The protein resides in the cytoplasm. In terms of biological role, an essential GTPase which binds GTP, GDP and possibly (p)ppGpp with moderate affinity, with high nucleotide exchange rates and a fairly low GTP hydrolysis rate. Plays a role in control of the cell cycle, stress response, ribosome biogenesis and in those bacteria that undergo differentiation, in morphogenesis control. The polypeptide is GTPase Obg (Streptococcus agalactiae serotype Ia (strain ATCC 27591 / A909 / CDC SS700)).